A 238-amino-acid polypeptide reads, in one-letter code: Uridylate kinase (238 aa).

12 to 15 (KLSG) lines the ATP pocket. The tract at residues 20-25 (GEKGFG) is involved in allosteric activation by GTP. A UMP-binding site is contributed by glycine 54. ATP contacts are provided by glycine 55 and arginine 59. Residues aspartate 72 and 133-140 (TGNPYFST) each bind UMP. Positions 166 and 169 each coordinate ATP.

The protein belongs to the UMP kinase family. As to quaternary structure, homohexamer.

Its subcellular location is the cytoplasm. The catalysed reaction is UMP + ATP = UDP + ADP. It participates in pyrimidine metabolism; CTP biosynthesis via de novo pathway; UDP from UMP (UMPK route): step 1/1. Its activity is regulated as follows. Allosterically activated by GTP. Inhibited by UTP. Functionally, catalyzes the reversible phosphorylation of UMP to UDP. The protein is Uridylate kinase of Clostridium botulinum (strain Hall / ATCC 3502 / NCTC 13319 / Type A).